The following is a 193-amino-acid chain: Xanthine phosphoribosyltransferase (193 aa).

Xanthine-binding residues include L20 and T27. 128–132 contacts 5-phospho-alpha-D-ribose 1-diphosphate; the sequence is ANGQA. Position 156 (K156) interacts with xanthine.

This sequence belongs to the purine/pyrimidine phosphoribosyltransferase family. Xpt subfamily. Homodimer.

Its subcellular location is the cytoplasm. The enzyme catalyses XMP + diphosphate = xanthine + 5-phospho-alpha-D-ribose 1-diphosphate. Its pathway is purine metabolism; XMP biosynthesis via salvage pathway; XMP from xanthine: step 1/1. Functionally, converts the preformed base xanthine, a product of nucleic acid breakdown, to xanthosine 5'-monophosphate (XMP), so it can be reused for RNA or DNA synthesis. The protein is Xanthine phosphoribosyltransferase of Streptococcus agalactiae serotype Ia (strain ATCC 27591 / A909 / CDC SS700).